The following is a 554-amino-acid chain: Asparagine synthetase B [glutamine-hydrolyzing] (554 aa).

Cys2 (for GATase activity) is an active-site residue. Residues 2 to 186 (CSIFGVFDIK…AGSYLWSQDG (185 aa)) form the Glutamine amidotransferase type-2 domain. L-glutamine-binding positions include 50–54 (RLSIV), 75–77 (NGE), and Asp99. ATP contacts are provided by residues Leu233, Val273, and 347 to 348 (SG).

This sequence belongs to the asparagine synthetase family. As to quaternary structure, homodimer.

The catalysed reaction is L-aspartate + L-glutamine + ATP + H2O = L-asparagine + L-glutamate + AMP + diphosphate + H(+). It functions in the pathway amino-acid biosynthesis; L-asparagine biosynthesis; L-asparagine from L-aspartate (L-Gln route): step 1/1. Its activity is regulated as follows. Glutamine-dependent asparagine synthesis activity can be inhibited by aspartic acid analogs (such as a sulfinate derivative and (2S,3R)-2-amino-3-methylsuccinate) in vitro; the inhibition is competitive with respect to aspartate. Its function is as follows. Catalyzes the ATP-dependent conversion of aspartate into asparagine, using glutamine as a source of nitrogen. Can also use ammonia as the nitrogen source in vitro, albeit with lower efficiency. As nucleotide substrates, ATP and dATP are utilized at a similar rate in both the glutamine- and ammonia-dependent reactions, whereas GTP utilization is only 15% that of ATP, and CTP, UTP, ITP and XTP are very poor or not substrates. Also exhibits glutaminase activity. The sequence is that of Asparagine synthetase B [glutamine-hydrolyzing] (asnB) from Escherichia coli (strain K12).